The chain runs to 300 residues: uncharacterized protein (300 aa).

Over residues 1-19 the composition is skewed to basic and acidic residues; that stretch reads MATKRAHPEDETHESKRAA. The segment at 1-20 is disordered; it reads MATKRAHPEDETHESKRAAQ.

This is an uncharacterized protein from Orgyia pseudotsugata multicapsid polyhedrosis virus (OpMNPV).